We begin with the raw amino-acid sequence, 363 residues long: Histidinol-phosphate aminotransferase (363 aa).

Lys-218 is subject to N6-(pyridoxal phosphate)lysine.

This sequence belongs to the class-II pyridoxal-phosphate-dependent aminotransferase family. Histidinol-phosphate aminotransferase subfamily. Homodimer. Requires pyridoxal 5'-phosphate as cofactor.

The enzyme catalyses L-histidinol phosphate + 2-oxoglutarate = 3-(imidazol-4-yl)-2-oxopropyl phosphate + L-glutamate. The protein operates within amino-acid biosynthesis; L-histidine biosynthesis; L-histidine from 5-phospho-alpha-D-ribose 1-diphosphate: step 7/9. This Xanthomonas oryzae pv. oryzae (strain MAFF 311018) protein is Histidinol-phosphate aminotransferase.